A 395-amino-acid polypeptide reads, in one-letter code: Flap endonuclease 1 (395 aa).

The segment at 1–104 (MGIKHLFQVI…GELAKRTARK (104 aa)) is N-domain. Mg(2+) is bound at residue Asp34. DNA is bound by residues Arg47 and Arg70. Mg(2+) contacts are provided by Asp86, Glu158, Glu160, Asp179, and Asp181. An I-domain region spans residues 122-253 (EIEKFSRRTV…NTALKLIREH (132 aa)). Glu158 lines the DNA pocket. DNA contacts are provided by Gly231 and Asp233. Asp233 is a binding site for Mg(2+). The interval 341 to 349 (QQSRLEGFF) is interaction with PCNA. A compositionally biased stretch (basic and acidic residues) spans 356–389 (DAEKASLKRKHDEKLQEQKKRKKEEAKAKKEAKA). Residues 356–395 (DAEKASLKRKHDEKLQEQKKRKKEEAKAKKEAKAKPRGAA) are disordered.

This sequence belongs to the XPG/RAD2 endonuclease family. FEN1 subfamily. In terms of assembly, interacts with PCNA. Three molecules of fen1 bind to one PCNA trimer with each molecule binding to one PCNA monomer. PCNA stimulates the nuclease activity without altering cleavage specificity. Mg(2+) is required as a cofactor. Post-translationally, phosphorylated. Phosphorylation upon DNA damage induces relocalization to the nuclear plasma.

It localises to the nucleus. The protein localises to the nucleolus. Its subcellular location is the nucleoplasm. It is found in the mitochondrion. Functionally, structure-specific nuclease with 5'-flap endonuclease and 5'-3' exonuclease activities involved in DNA replication and repair. During DNA replication, cleaves the 5'-overhanging flap structure that is generated by displacement synthesis when DNA polymerase encounters the 5'-end of a downstream Okazaki fragment. It enters the flap from the 5'-end and then tracks to cleave the flap base, leaving a nick for ligation. Also involved in the long patch base excision repair (LP-BER) pathway, by cleaving within the apurinic/apyrimidinic (AP) site-terminated flap. Acts as a genome stabilization factor that prevents flaps from equilibrating into structures that lead to duplications and deletions. Also possesses 5'-3' exonuclease activity on nicked or gapped double-stranded DNA, and exhibits RNase H activity. Also involved in replication and repair of rDNA and in repairing mitochondrial DNA. The protein is Flap endonuclease 1 (fen1) of Aspergillus clavatus (strain ATCC 1007 / CBS 513.65 / DSM 816 / NCTC 3887 / NRRL 1 / QM 1276 / 107).